The following is a 148-amino-acid chain: Protein GLUTAMINE DUMPER 3 (148 aa).

Residues 1-24 (MEGRQYYPPRENVEGNRTTMGGGP) form a disordered region. The Extracellular portion of the chain corresponds to 1–34 (MEGRQYYPPRENVEGNRTTMGGGPHSPWHSPVPY). The chain crosses the membrane as a helical span at residues 35 to 55 (LFGGLAAMLGLIAFALLILAC). The Cytoplasmic segment spans residues 56-148 (SYWRLSGYLD…RSSESNGETH (93 aa)). The VIMAG motif lies at 99-103 (VIMAG). Residues 120-132 (CDDDDDEDDDVEG) show a composition bias toward acidic residues. Residues 120 to 148 (CDDDDDEDDDVEGSDQVVPRSSESNGETH) form a disordered region. Polar residues predominate over residues 138 to 148 (PRSSESNGETH).

The protein belongs to the GLUTAMINE DUMPER 1 (TC 9.B.60) family. As to expression, expressed in the vascular tissues. Also detected in anthers.

It localises to the membrane. Its function is as follows. Probable subunit of an amino acid transporter involved in the regulation of the amino acid metabolism. Stimulates amino acid export by activating nonselective amino acid facilitators. Acts upstream genes involved in the salicylic acid (SA) pathway and in the geminivirus-host interaction. The protein is Protein GLUTAMINE DUMPER 3 (GDU3) of Arabidopsis thaliana (Mouse-ear cress).